The primary structure comprises 246 residues: MLDQVCQLARNAGDAIMQVYDGTKPMDVVSKADNSPVTAADIAAHTVIMDGLRTLTPDVPVLSEEDPPGWEVRQHWQRYWLVDPLDGTKEFIKRNGEFTVNIALIDHGKPILGVVYAPVMNVMYSAAEGKAWKEECGVRKQIQVRDARPPLVVISRSHADAELKEYLQQLGEHQTTSIGSSLKFCLVAEGQAQLYPRFGPTNIWDTAAGHAVAAAAGAHVHDWQGKPLDYTPRESFLNPGFRVSIY.

5 residues coordinate Mg(2+): Glu-64, Asp-83, Leu-85, Asp-86, and Asp-205. Glu-64 provides a ligand contact to substrate. Substrate-binding positions include 85-88 (LDGT) and Asp-205.

It belongs to the inositol monophosphatase superfamily. CysQ family. Requires Mg(2+) as cofactor.

The protein resides in the cell inner membrane. The catalysed reaction is adenosine 3',5'-bisphosphate + H2O = AMP + phosphate. Inhibited by lithium and calcium. In terms of biological role, converts adenosine-3',5'-bisphosphate (PAP) to AMP. May also convert adenosine 3'-phosphate 5'-phosphosulfate (PAPS) to adenosine 5'-phosphosulfate (APS). Has 10000-fold lower activity towards inositol 1,4-bisphosphate (Ins(1,4)P2). This is 3'(2'),5'-bisphosphate nucleotidase CysQ from Escherichia coli (strain K12).